The following is a 40-amino-acid chain: Conotoxin Bt14.16 (40 aa).

The propeptide occupies 1–18; the sequence is SDGRDAAVIYTESDVIAR. Disulfide bonds link Cys-21–Cys-36 and Cys-24–Cys-29.

This sequence belongs to the conotoxin A superfamily. As to expression, expressed by the venom duct.

It localises to the secreted. Probable neurotoxin with unknown target. Possibly targets ion channels. This chain is Conotoxin Bt14.16, found in Conus betulinus (Beech cone).